The following is a 492-amino-acid chain: Probable beta-1,4-xylosyltransferase IRX14H (492 aa).

Topologically, residues 1–33 are cytoplasmic; the sequence is MKLSVFRLSYWNRRGSSFRSSPSLDPSFDGKSP. Residues 34–54 form a helical; Signal-anchor for type II membrane protein membrane-spanning segment; the sequence is SSVFWFVIHGLCCLISLILGF. Residues 55-492 lie on the Lumenal side of the membrane; that stretch reads RFSHLVLFFL…FDGVKVSATS (438 aa). 3 N-linked (GlcNAc...) asparagine glycosylation sites follow: asparagine 99, asparagine 196, and asparagine 314. Residues 457–492 form a disordered region; sequence IKEAKSNSKPRVSKSKSYKEKQEPKAFDGVKVSATS. The segment covering 473–484 has biased composition (basic and acidic residues); it reads SYKEKQEPKAFD.

Belongs to the glycosyltransferase 43 family. Expressed in developing interfascicular fibers and xylem cells in stems and developing secondary xylem in roots.

It localises to the golgi apparatus membrane. Involved in the synthesis of the hemicellulose glucuronoxylan, a major component of secondary cell walls. Probably involved in the elongation of glucuronoxylan xylosyl backbone. This chain is Probable beta-1,4-xylosyltransferase IRX14H (IRX14H), found in Arabidopsis thaliana (Mouse-ear cress).